The primary structure comprises 470 residues: Beta-Ala-Xaa dipeptidase (470 aa).

Histidine 87 contacts Zn(2+). Aspartate 89 is an active-site residue. Residue aspartate 119 coordinates Zn(2+). The active-site Proton acceptor is the glutamate 153. Positions 154 and 177 each coordinate Zn(2+). Arginine 350 is a binding site for substrate. Histidine 439 is a Zn(2+) binding site.

The protein belongs to the peptidase M20A family. The cofactor is Zn(2+).

Its subcellular location is the cytoplasm. With respect to regulation, fully inhibited by 1,10-phenanthroline or EDTA. Its function is as follows. Is a relatively unspecific dipeptidase cleaving a variety of dipeptides, notably those with an N-terminal beta-Ala or D-Ala residue, e.g. carnosine (beta-Ala-His). To a lesser extent, also shows aminopeptidase activity, since it is able to catalyze the removal of the N-terminal amino acid from a few distinct tripeptides. The sequence is that of Beta-Ala-Xaa dipeptidase (pepV) from Lactobacillus delbrueckii subsp. lactis.